The following is a 379-amino-acid chain: DNA replication and repair protein RecF (379 aa).

34 to 41 (GDNGAGKT) contacts ATP.

It belongs to the RecF family.

It localises to the cytoplasm. In terms of biological role, the RecF protein is involved in DNA metabolism; it is required for DNA replication and normal SOS inducibility. RecF binds preferentially to single-stranded, linear DNA. It also seems to bind ATP. The protein is DNA replication and repair protein RecF of Mesorhizobium japonicum (strain LMG 29417 / CECT 9101 / MAFF 303099) (Mesorhizobium loti (strain MAFF 303099)).